A 511-amino-acid chain; its full sequence is 2-isopropylmalate synthase (511 aa).

Positions 6–269 constitute a Pyruvate carboxyltransferase domain; it reads IIIFDTTLRD…YTDIKCENIF (264 aa). Residues aspartate 15, histidine 203, histidine 205, and asparagine 239 each coordinate Mn(2+). Residues 394–511 form a regulatory domain region; it reads VIEKLSVISG…SLKVEERKMA (118 aa).

Belongs to the alpha-IPM synthase/homocitrate synthase family. LeuA type 1 subfamily. In terms of assembly, homodimer. Requires Mn(2+) as cofactor.

It localises to the cytoplasm. It carries out the reaction 3-methyl-2-oxobutanoate + acetyl-CoA + H2O = (2S)-2-isopropylmalate + CoA + H(+). The protein operates within amino-acid biosynthesis; L-leucine biosynthesis; L-leucine from 3-methyl-2-oxobutanoate: step 1/4. In terms of biological role, catalyzes the condensation of the acetyl group of acetyl-CoA with 3-methyl-2-oxobutanoate (2-ketoisovalerate) to form 3-carboxy-3-hydroxy-4-methylpentanoate (2-isopropylmalate). The chain is 2-isopropylmalate synthase from Campylobacter jejuni subsp. jejuni serotype O:23/36 (strain 81-176).